The following is a 114-amino-acid chain: MEFFGQLDQMLGSSRENNLWYQKALYFMRRSGIIAKEKVFPKVSANYSPLEGLEFFRIDTLNANLLYERLIVSVLALPRRKKEINLTVKMQKESKRCNGSYPPLISESNAKTTQ.

This is an uncharacterized protein from Archaeoglobus fulgidus (strain ATCC 49558 / DSM 4304 / JCM 9628 / NBRC 100126 / VC-16).